Reading from the N-terminus, the 259-residue chain is MTLLEKTRKINAMLQNAAGKTVNFKEMADTLTDVIEANTYIVSRKGKLLGYSESLPIENDRMKQMLTERQFPEEYTQSLFNVGETSSNLEVSSQYTAFPIENSDLFTKGLTTIVPIVGGGERLGTLILSRLESNFTDDDLLLAEYGGTVVGMEILHEKAEEIEEEARSRAVVQMAISSLSYSELEAIEHIFDELNGKEGLLVASKIADRVGITRSVIVNALRKLESAGVIDSRSLGMKGTFIRVLNDKFLVELEKLKNN.

Residues 1 to 155 (MTLLEKTRKI…GGTVVGMEIL (155 aa)) form a GAF domain region. A DNA-binding region (H-T-H motif) is located at residues 203–222 (ASKIADRVGITRSVIVNALR).

It belongs to the CodY family.

It localises to the cytoplasm. In terms of biological role, DNA-binding global transcriptional regulator which is involved in the adaptive response to starvation and acts by directly or indirectly controlling the expression of numerous genes in response to nutrient availability. During rapid exponential growth, CodY is highly active and represses genes whose products allow adaptation to nutrient depletion. In Listeria welshimeri serovar 6b (strain ATCC 35897 / DSM 20650 / CCUG 15529 / CIP 8149 / NCTC 11857 / SLCC 5334 / V8), this protein is Global transcriptional regulator CodY.